Here is a 470-residue protein sequence, read N- to C-terminus: 3-isopropylmalate dehydratase large subunit (470 aa).

[4Fe-4S] cluster-binding residues include Cys349, Cys409, and Cys412.

Belongs to the aconitase/IPM isomerase family. LeuC type 1 subfamily. As to quaternary structure, heterodimer of LeuC and LeuD. [4Fe-4S] cluster serves as cofactor.

The enzyme catalyses (2R,3S)-3-isopropylmalate = (2S)-2-isopropylmalate. The protein operates within amino-acid biosynthesis; L-leucine biosynthesis; L-leucine from 3-methyl-2-oxobutanoate: step 2/4. Functionally, catalyzes the isomerization between 2-isopropylmalate and 3-isopropylmalate, via the formation of 2-isopropylmaleate. In Methylobacterium radiotolerans (strain ATCC 27329 / DSM 1819 / JCM 2831 / NBRC 15690 / NCIMB 10815 / 0-1), this protein is 3-isopropylmalate dehydratase large subunit.